We begin with the raw amino-acid sequence, 124 residues long: Glucagon-1 (124 aa).

The signal sequence occupies residues 1–25 (MKRIHSLAGILLVLGLIQSSCRVLM). Positions 28 to 54 (ADPSSSLEADSTLKDEPRELSNMKRHS) are disordered. The segment covering 38-54 (STLKDEPRELSNMKRHS) has biased composition (basic and acidic residues). The propeptide occupies 84–88 (SGVAE).

This sequence belongs to the glucagon family.

Its subcellular location is the secreted. Functionally, glucagon plays a key role in glucose metabolism and homeostasis. Regulates blood glucose by increasing gluconeogenesis and decreasing glycolysis. This is Glucagon-1 (gcg1) from Lophius americanus (American angler).